We begin with the raw amino-acid sequence, 146 residues long: Hemoglobin subunit beta (146 aa).

N-acetylvaline is present on V1. The 145-residue stretch at 2–146 (HLTGEEKSAV…VANALAHKYH (145 aa)) folds into the Globin domain. A Phosphothreonine modification is found at T12. The residue at position 44 (S44) is a Phosphoserine. The residue at position 59 (K59) is an N6-acetyllysine. H63 serves as a coordination point for heme b. The residue at position 82 (K82) is an N6-acetyllysine. Position 92 (H92) interacts with heme b. C93 bears the S-nitrosocysteine mark. K144 is modified (N6-acetyllysine).

The protein belongs to the globin family. In terms of assembly, heterotetramer of two alpha chains and two beta chains. As to expression, red blood cells.

In terms of biological role, involved in oxygen transport from the lung to the various peripheral tissues. This chain is Hemoglobin subunit beta (HBB), found in Saguinus mystax (Moustached tamarin).